Reading from the N-terminus, the 372-residue chain is 18-hydroxynorfluorocurarine reductase (372 aa).

The Zn(2+) site is built by cysteine 47, aspartate 50, histidine 69, glutamate 70, cysteine 100, cysteine 103, cysteine 106, cysteine 114, and cysteine 172. Residues 197–202 (GLGGIG), lysine 226, 283–285 (LGA), serine 307, and arginine 354 each bind NADP(+).

The protein belongs to the zinc-containing alcohol dehydrogenase family. Homodimer. Requires Zn(2+) as cofactor. As to expression, mainly expressed in roots.

The enzyme catalyses (19E)-cur-19-en-17-al + NADP(+) = norfluorocurarine + NADPH + H(+). It carries out the reaction 17,18-epoxy-17-hydroxycur-19-ene + NADP(+) = 18-hydroxynorfluorocurarine + NADPH + H(+). Its pathway is alkaloid biosynthesis. Alcohol dehydrogenase involved in the biosynthesis of curare monoterpene indole alkaloids (MIAs), natural products such as strychnine, a neurotoxic compound used as a pesticide to control rodents, and its pharmacologically active derivatives, including brucine, used to regulate blood pressure. Curare alkaloids act as animal glycine receptor antagonists. Catalyzes the conversion of norfluorocurarine to desoxy Wieland-Gumlich aldehyde, and of 18-OH norfluorocurarine to Wieland-Gumlich aldehyde. In Strychnos nux-vomica (Poison nut), this protein is 18-hydroxynorfluorocurarine reductase.